The sequence spans 421 residues: Enolase (421 aa).

Residue Q162 coordinates (2R)-2-phosphoglycerate. The active-site Proton donor is E204. D241, E284, and D311 together coordinate Mg(2+). (2R)-2-phosphoglycerate-binding residues include K336, R365, S366, and K387. The Proton acceptor role is filled by K336.

It belongs to the enolase family. It depends on Mg(2+) as a cofactor.

It is found in the cytoplasm. It localises to the secreted. The protein resides in the cell surface. It carries out the reaction (2R)-2-phosphoglycerate = phosphoenolpyruvate + H2O. The protein operates within carbohydrate degradation; glycolysis; pyruvate from D-glyceraldehyde 3-phosphate: step 4/5. In terms of biological role, catalyzes the reversible conversion of 2-phosphoglycerate (2-PG) into phosphoenolpyruvate (PEP). It is essential for the degradation of carbohydrates via glycolysis. This is Enolase from Nitratiruptor sp. (strain SB155-2).